Consider the following 141-residue polypeptide: MAKKVTAVIKLALQAGKANPAPPVGPALGQHGVNIMAFCKEYNARTQDKAGFVIPVEISVFEDRSFTFITKTPPASVLIVKAAGIEKGSGESAKGSVGSITRAQLEEIANTKLPDLNCSSVESAMRIIEGTARNMGVAVKD.

The protein belongs to the universal ribosomal protein uL11 family. Part of the ribosomal stalk of the 50S ribosomal subunit. Interacts with L10 and the large rRNA to form the base of the stalk. L10 forms an elongated spine to which L12 dimers bind in a sequential fashion forming a multimeric L10(L12)X complex. One or more lysine residues are methylated.

Its function is as follows. Forms part of the ribosomal stalk which helps the ribosome interact with GTP-bound translation factors. The protein is Large ribosomal subunit protein uL11 of Synechococcus sp. (strain RCC307).